Reading from the N-terminus, the 595-residue chain is Putative terpenoid synthase 16 (595 aa).

Positions 349, 353, 494, and 502 each coordinate Mg(2+). Residues 349–353 (DDTCD) carry the DDXXD motif motif.

It belongs to the terpene synthase family. Tpsa subfamily. It depends on Mg(2+) as a cofactor. The cofactor is Mn(2+).

The protein localises to the cytoplasm. It participates in secondary metabolite biosynthesis; terpenoid biosynthesis. The protein is Putative terpenoid synthase 16 (TPS16) of Arabidopsis thaliana (Mouse-ear cress).